A 345-amino-acid polypeptide reads, in one-letter code: MGIKQLSKLLRENSKRGIRERPLVYYSSKKVAIDASMSMYQFLIAVRSGGATLGNEDSPTSHLVGFFYRTIRMVELGITPVYVFDGVPPEIKMKELEKRKERRAAADREYREASEVGDKELMEMYDKRKTKVTGVHVDECKRLLGLMGIPFETAPSEAEAYCALLCKKKAVYGVATEDMDALTFGSPVVLRNFNGTQSKRLPVMEHNLPQILEDLSLDHSEFIDLCILLGCDYCSTLKGIGPKKALGLIKKHRSIGNILKNEDLEVPGDWRYSDAQKIFGSLAEIGEIRDFNISWDSIDRNGIVNFLVEEKGFDLERVNKGIDKLINSRKKGTQGRLDCFITRSK.

The interval 1-103 (MGIKQLSKLL…KELEKRKERR (103 aa)) is N-domain. D34 is a Mg(2+) binding site. R47 and R69 together coordinate DNA. Positions 85, 157, 159, 178, and 180 each coordinate Mg(2+). An I-domain region spans residues 121-252 (LMEMYDKRKT…KKALGLIKKH (132 aa)). E157 contributes to the DNA binding site. The DNA site is built by G230 and D232. D232 lines the Mg(2+) pocket. The segment at 333–341 (TQGRLDCFI) is interaction with PCNA.

It belongs to the XPG/RAD2 endonuclease family. FEN1 subfamily. As to quaternary structure, interacts with PCNA. Three molecules of FEN1 bind to one PCNA trimer with each molecule binding to one PCNA monomer. PCNA stimulates the nuclease activity without altering cleavage specificity. Mg(2+) is required as a cofactor. In terms of processing, phosphorylated. Phosphorylation upon DNA damage induces relocalization to the nuclear plasma.

Its subcellular location is the nucleus. The protein resides in the nucleolus. It localises to the nucleoplasm. The protein localises to the mitochondrion. In terms of biological role, structure-specific nuclease with 5'-flap endonuclease and 5'-3' exonuclease activities involved in DNA replication and repair. During DNA replication, cleaves the 5'-overhanging flap structure that is generated by displacement synthesis when DNA polymerase encounters the 5'-end of a downstream Okazaki fragment. It enters the flap from the 5'-end and then tracks to cleave the flap base, leaving a nick for ligation. Also involved in the long patch base excision repair (LP-BER) pathway, by cleaving within the apurinic/apyrimidinic (AP) site-terminated flap. Acts as a genome stabilization factor that prevents flaps from equilibrating into structures that lead to duplications and deletions. Also possesses 5'-3' exonuclease activity on nicked or gapped double-stranded DNA, and exhibits RNase H activity. Also involved in replication and repair of rDNA and in repairing mitochondrial DNA. The chain is Flap endonuclease 1 from Encephalitozoon cuniculi (strain GB-M1) (Microsporidian parasite).